Here is a 1044-residue protein sequence, read N- to C-terminus: R3H domain-containing protein 2 (1044 aa).

2 disordered regions span residues 23–71 (EESV…AKSN) and 106–147 (SCPS…QEYT). Over residues 36–56 (PSKEDVEKEGEENGLRQETQR) the composition is skewed to basic and acidic residues. S37 is modified (phosphoserine). Residues 58–71 (TSSHGHARKRAKSN) are compositionally biased toward basic residues. Over residues 109-143 (SDKEEEKSTKDVSEKEDKDKSKEKVPRKMLSRDSS) the composition is skewed to basic and acidic residues. At S143 the chain carries Phosphoserine. The 64-residue stretch at 169–232 (RMMLLKLEQE…AVIINKTSST (64 aa)) folds into the R3H domain. In terms of domain architecture, SUZ spans 233 to 303 (RIPEQRFSEH…VRERIFARET (71 aa)). Basic and acidic residues-rich tracts occupy residues 261–270 (DASMDRDDNQ) and 277–288 (DGRRSKSIEERE). Disordered stretches follow at residues 261-288 (DASM…EERE), 320-408 (SSSS…LSRP), 433-485 (CTAQ…FSPS), 502-533 (MAED…LFQP), 551-600 (GQPL…SNQQ), 729-770 (GTSP…SPSG), and 807-848 (GQKP…SLSN). Low complexity predominate over residues 338 to 349 (SRTSSSRQSSTD). Phosphoserine is present on residues S362, S365, and S381. Over residues 433–449 (CTAQQQQQQQQQQQQLP) the composition is skewed to low complexity. Polar residues-rich tracts occupy residues 509–521 (PFGQ…QGST) and 554–572 (LPTS…QQVL). Over residues 757-770 (PQMSQQYSGVSPSG) the composition is skewed to low complexity. Residues 818 to 848 (GSPQANAQMGSSPVTSPTQSPAPSPVTSLSN) are compositionally biased toward polar residues. Residues S921 and S923 each carry the phosphoserine modification. Residues T924 and T928 each carry the phosphothreonine modification.

The protein localises to the nucleus. The sequence is that of R3H domain-containing protein 2 (R3hdm2) from Mus musculus (Mouse).